Consider the following 161-residue polypeptide: Nucleotide-binding protein Rmet_2899 (161 aa).

It belongs to the YajQ family.

In terms of biological role, nucleotide-binding protein. This Cupriavidus metallidurans (strain ATCC 43123 / DSM 2839 / NBRC 102507 / CH34) (Ralstonia metallidurans) protein is Nucleotide-binding protein Rmet_2899.